Reading from the N-terminus, the 545-residue chain is Phospholipase B-like 1 (545 aa).

The signal sequence occupies residues 1-35 (MSRHSQDERLGLPQPPALLPLLLLLLAVAVPLSQA). The N-linked (GlcNAc...) (high mannose) asparagine; alternate glycan is linked to Asn68. Residue Asn68 is glycosylated (N-linked (GlcNAc...) (hybrid) asparagine; alternate). The propeptide at 206–224 (LSPTKNSSLKFFKRWDMGH) is removed in mature form. N-linked (GlcNAc...) (high mannose) asparagine; alternate glycans are attached at residues Asn305, Asn363, and Asn408. N-linked (GlcNAc...) (hybrid) asparagine; alternate glycosylation is found at Asn305, Asn363, and Asn408. Intrachain disulfides connect Cys467-Cys472 and Cys471-Cys486. A glycan (N-linked (GlcNAc...) (high mannose) asparagine; alternate) is linked at Asn523. Asn523 is a glycosylation site (N-linked (GlcNAc...) (hybrid) asparagine; alternate).

The protein belongs to the phospholipase B-like family. May form a homodimer, each monomer is composed of a chain A and a chain B. In terms of processing, the maturation cleavages that produces chains A and B are required to open the putative substrate binding pocket. Both chains A and B remain associated in the mature protein.

It is found in the lysosome. In terms of biological role, exhibits a weak phospholipase activity, acting on various phospholipids, including phosphatidylcholine, phosphatidylinositol, phosphatidylethanolamine and lysophospholipids. However, in view of the small size of the putative binding pocket, it has been proposed that it may act rather as an amidase or a peptidase. This is Phospholipase B-like 1 (PLBD1) from Bos taurus (Bovine).